A 189-amino-acid chain; its full sequence is Pyridoxal 5'-phosphate synthase subunit PdxT (189 aa).

47–49 (GES) contributes to the L-glutamine binding site. The active-site Nucleophile is Cys-79. Residues Arg-106 and 135-136 (IR) contribute to the L-glutamine site. Active-site charge relay system residues include His-171 and Glu-173.

This sequence belongs to the glutaminase PdxT/SNO family. In the presence of PdxS, forms a dodecamer of heterodimers. Only shows activity in the heterodimer.

The catalysed reaction is aldehydo-D-ribose 5-phosphate + D-glyceraldehyde 3-phosphate + L-glutamine = pyridoxal 5'-phosphate + L-glutamate + phosphate + 3 H2O + H(+). It catalyses the reaction L-glutamine + H2O = L-glutamate + NH4(+). Its pathway is cofactor biosynthesis; pyridoxal 5'-phosphate biosynthesis. Its function is as follows. Catalyzes the hydrolysis of glutamine to glutamate and ammonia as part of the biosynthesis of pyridoxal 5'-phosphate. The resulting ammonia molecule is channeled to the active site of PdxS. The protein is Pyridoxal 5'-phosphate synthase subunit PdxT of Thermoanaerobacter pseudethanolicus (strain ATCC 33223 / 39E) (Clostridium thermohydrosulfuricum).